Reading from the N-terminus, the 234-residue chain is MEFSPPLQRATLIQRYKRFLADVITPDGRELTLHCPNTGAMTGCATPGDTVWYSTSDNTKRKYPHTWELTQSQSGAFICVNTLWANRLTKEAILNESISELSGYSSLKSEVKYGSERSRIDFMLQADSRPDCYIEVKSVTLAENEQGYFPDAVTERGQKHLRELMNVAAEGQRAVIFFAVLHSAITRFSPARHIDEKYAQLLSEAQQRGVEILAYKAEISAEGMALKKSLPVTL.

Residues 201-220 (LLSEAQQRGVEILAYKAEIS) constitute a DNA-binding region (H-T-H motif).

The protein belongs to the SfsA family.

Binds to DNA non-specifically. Could be a regulatory factor involved in maltose metabolism. The chain is Sugar fermentation stimulation protein A from Shigella flexneri serotype 5b (strain 8401).